The following is a 657-amino-acid chain: Probable potassium transport system protein Kup 1 (657 aa).

Transmembrane regions (helical) follow at residues 40–60 (VTSG…GDIG), 88–108 (VLSL…VLLL), 135–155 (WFLL…SMIT), 172–192 (PALE…LFAV), 198–218 (ALVA…IAVM), 241–261 (FLLS…LAVT), 282–302 (WMFF…ALVL), 320–340 (LVLP…QAVI), 380–400 (LLLI…NLAS), 402–422 (YGIA…VVIW), 432–452 (AAAV…ANLL), and 454–474 (LLEG…TIWT).

Belongs to the HAK/KUP transporter (TC 2.A.72) family.

The protein resides in the cell inner membrane. The enzyme catalyses K(+)(in) + H(+)(in) = K(+)(out) + H(+)(out). Its function is as follows. Transport of potassium into the cell. Likely operates as a K(+):H(+) symporter. This chain is Probable potassium transport system protein Kup 1, found in Bradyrhizobium diazoefficiens (strain JCM 10833 / BCRC 13528 / IAM 13628 / NBRC 14792 / USDA 110).